Here is a 381-residue protein sequence, read N- to C-terminus: Creatine kinase B-type (381 aa).

S4 is modified (phosphoserine). Residues 11-98 (KLRFPAEDEF…FDPIIEDRHG (88 aa)) form the Phosphagen kinase N-terminal domain. A Phosphothreonine modification is found at T35. Residue K45 forms a Glycyl lysine isopeptide (Lys-Gly) (interchain with G-Cter in ubiquitin) linkage. Position 72 (V72) interacts with creatine. The segment covering 96 to 110 (RHGGYKPSDEHKTDL) has biased composition (basic and acidic residues). The segment at 96–122 (RHGGYKPSDEHKTDLNPDNLQGGDDLD) is disordered. Residues K101 and K107 each participate in a glycyl lysine isopeptide (Lys-Gly) (interchain with G-Cter in ubiquitin) cross-link. Phosphotyrosine is present on Y125. A Phosphagen kinase C-terminal domain is found at 125–367 (YVLSSRVRTG…KLLIEMEQRL (243 aa)). Residues 128–132 (SSRVR), R130, R132, and H191 each bind ATP. The segment at 130 to 138 (RVRTGRSIR) is internal MTS-like signal. The residue at position 199 (S199) is a Phosphoserine. E232 lines the creatine pocket. ATP is bound at residue R236. Y269 carries the 3'-nitrotyrosine modification. S285 is a creatine binding site. R292 serves as a coordination point for ATP. S309 carries the phosphoserine modification. Residues R320, 320 to 325 (RGTGGV), and D335 each bind ATP. T322 is subject to Phosphothreonine. Residue K381 forms a Glycyl lysine isopeptide (Lys-Gly) (interchain with G-Cter in ubiquitin) linkage.

The protein belongs to the ATP:guanido phosphotransferase family. As to quaternary structure, dimer of identical or non-identical chains, which can be either B (brain type) or M (muscle type). With MM being the major form in skeletal muscle and myocardium, MB existing in myocardium, and BB existing in many tissues, especially brain. Interacts with SLC12A6 (via C-terminus); the interaction may be required for SLC12A6 potassium-chloride cotransport activity. Ubiquitinated by the ECS(ASB9) complex, leading to its degradation by the proteasome.

It localises to the cytoplasm. The protein resides in the cytosol. It is found in the mitochondrion. The protein localises to the cell membrane. It catalyses the reaction creatine + ATP = N-phosphocreatine + ADP + H(+). Reversibly catalyzes the transfer of phosphate between ATP and various phosphogens (e.g. creatine phosphate). Creatine kinase isoenzymes play a central role in energy transduction in tissues with large, fluctuating energy demands, such as skeletal muscle, heart, brain and spermatozoa. Acts as a key regulator of adaptive thermogenesis as part of the futile creatine cycle: localizes to the mitochondria of thermogenic fat cells and acts by mediating phosphorylation of creatine to initiate a futile cycle of creatine phosphorylation and dephosphorylation. During the futile creatine cycle, creatine and N-phosphocreatine are in a futile cycle, which dissipates the high energy charge of N-phosphocreatine as heat without performing any mechanical or chemical work. The polypeptide is Creatine kinase B-type (Homo sapiens (Human)).